A 137-amino-acid polypeptide reads, in one-letter code: Small ribosomal subunit protein uS12 (137 aa).

The disordered stretch occupies residues Met-1–Pro-55. Asp-102 is subject to 3-methylthioaspartic acid. The tract at residues Ser-118–Asn-137 is disordered.

Belongs to the universal ribosomal protein uS12 family. As to quaternary structure, part of the 30S ribosomal subunit. Contacts proteins S8 and S17. May interact with IF1 in the 30S initiation complex.

Functionally, with S4 and S5 plays an important role in translational accuracy. Its function is as follows. Interacts with and stabilizes bases of the 16S rRNA that are involved in tRNA selection in the A site and with the mRNA backbone. Located at the interface of the 30S and 50S subunits, it traverses the body of the 30S subunit contacting proteins on the other side and probably holding the rRNA structure together. The combined cluster of proteins S8, S12 and S17 appears to hold together the shoulder and platform of the 30S subunit. This chain is Small ribosomal subunit protein uS12, found in Staphylococcus epidermidis (strain ATCC 35984 / DSM 28319 / BCRC 17069 / CCUG 31568 / BM 3577 / RP62A).